A 274-amino-acid polypeptide reads, in one-letter code: Large ribosomal subunit protein uL2cz/uL2cy (274 aa).

A disordered region spans residues 224–252 (NPVDHPHGGGEGRAPIGRKKPVTPWGYPA).

It belongs to the universal ribosomal protein uL2 family. As to quaternary structure, part of the 50S ribosomal subunit.

The protein localises to the plastid. It localises to the chloroplast. The chain is Large ribosomal subunit protein uL2cz/uL2cy (rpl2-A) from Capsella bursa-pastoris (Shepherd's purse).